We begin with the raw amino-acid sequence, 134 residues long: Loki profilin-2 (134 aa).

The loki loop stretch occupies residues 55–62; it reads LALGEKGI.

This sequence belongs to the Asgard profilin family.

The protein localises to the cytoplasm. The protein resides in the cytoskeleton. Inhibition of rabbit actin polymerization is reduced by phosphatidylinositol-(4,5)-P2(1,2-dipalmitoyl), a soluble form of the phospholipid phosphatidylinositol, suggesting an unknown lipid might regulate actin-profilin interaction in vivo. Its function is as follows. Binds to actin and affects the structure of the cytoskeleton. At high concentrations inhibits spontaneous rabbit actin nucleation. This strongly suggests this archaea has a profilin-regulated actin system, and actin-type genes can be identified in this organism. In Lokiarchaeum sp. (strain GC14_75), this protein is Loki profilin-2.